A 354-amino-acid chain; its full sequence is Glycine betaine/proline betaine transport system permease protein ProW (354 aa).

The disordered stretch occupies residues 1-28 (MADQTNPWDTAQVADTTTQTADAWGTPA). Residues 1–99 (MADQTNPWDT…VDYILNGFQQ (99 aa)) are Cytoplasmic-facing. Residues 9–23 (DTAQVADTTTQTADA) show a composition bias toward low complexity. The chain crosses the membrane as a helical span at residues 100–120 (LLLGMPAPVAIILFALIAWQV). Ser-121 is a topological domain (periplasmic). A helical transmembrane segment spans residues 122 to 142 (GVGMGIATLISLIAIGAIGAW). Residues 143–148 (SQAMIT) are Cytoplasmic-facing. The ABC transmembrane type-1 domain maps to 145–324 (AMITLALVLT…ILAIILDRLT (180 aa)). The chain crosses the membrane as a helical span at residues 149 to 169 (LALVLTALLFCVVIGLPMGIW). Topologically, residues 170-198 (LARSPRAAKIVRPLLDAMQTTPAFVYLVP) are periplasmic. Residues 199–219 (IVMLFGIGNVPGVVVTIIFAL) traverse the membrane as a helical segment. The Cytoplasmic portion of the chain corresponds to 220–270 (PPIVRLTILGINQVPADLIEASRSFGASPRQMLFKVQLPLAMPTIMAGVNQ). The helical transmembrane segment at 271–291 (TLMLALSMVVIASMIAVGGLG) threads the bilayer. Topologically, residues 292–300 (QMVLRGIGR) are periplasmic. A helical membrane pass occupies residues 301 to 321 (LDMGLATVGGVGIVILAIILD). The Cytoplasmic segment spans residues 322–354 (RLTQAVGRDSRSRGNRRWYTTGPVGLITRPFVK).

The protein belongs to the binding-protein-dependent transport system permease family. CysTW subfamily. The complex is composed of two ATP-binding proteins (ProV), two transmembrane proteins (ProW) and a solute-binding protein (ProX).

It is found in the cell inner membrane. Part of the ProU ABC transporter complex involved in glycine betaine and proline betaine uptake. Probably responsible for the translocation of the substrate across the membrane. This chain is Glycine betaine/proline betaine transport system permease protein ProW, found in Salmonella typhimurium (strain LT2 / SGSC1412 / ATCC 700720).